A 296-amino-acid polypeptide reads, in one-letter code: Diaminopimelate epimerase (296 aa).

Asn17, Gln49, and Asn69 together coordinate substrate. Cys78 (proton donor) is an active-site residue. Substrate contacts are provided by residues 79–80 (GN), Asn171, Asn205, and 223–224 (ER). The active-site Proton acceptor is Cys232. Residue 233-234 (GT) participates in substrate binding.

Belongs to the diaminopimelate epimerase family. As to quaternary structure, homodimer.

Its subcellular location is the cytoplasm. The catalysed reaction is (2S,6S)-2,6-diaminopimelate = meso-2,6-diaminopimelate. It participates in amino-acid biosynthesis; L-lysine biosynthesis via DAP pathway; DL-2,6-diaminopimelate from LL-2,6-diaminopimelate: step 1/1. Catalyzes the stereoinversion of LL-2,6-diaminopimelate (L,L-DAP) to meso-diaminopimelate (meso-DAP), a precursor of L-lysine and an essential component of the bacterial peptidoglycan. The polypeptide is Diaminopimelate epimerase (Methylorubrum extorquens (strain PA1) (Methylobacterium extorquens)).